Consider the following 193-residue polypeptide: Potassium-transporting ATPase KdpC subunit (193 aa).

A helical transmembrane segment spans residues 10 to 30; that stretch reads AAIIIFSVLTGVIYPALVTVI.

Belongs to the KdpC family. In terms of assembly, the system is composed of three essential subunits: KdpA, KdpB and KdpC.

The protein localises to the cell membrane. Functionally, part of the high-affinity ATP-driven potassium transport (or Kdp) system, which catalyzes the hydrolysis of ATP coupled with the electrogenic transport of potassium into the cytoplasm. This subunit acts as a catalytic chaperone that increases the ATP-binding affinity of the ATP-hydrolyzing subunit KdpB by the formation of a transient KdpB/KdpC/ATP ternary complex. This Herpetosiphon aurantiacus (strain ATCC 23779 / DSM 785 / 114-95) protein is Potassium-transporting ATPase KdpC subunit.